The chain runs to 240 residues: tRNA (guanine-N(7)-)-methyltransferase (240 aa).

The tract at residues 1-20 (MTESHDTPITSDGEARPHRR) is disordered. The S-adenosyl-L-methionine site is built by Glu70, Glu95, Asp122, and Asp145. Asp145 is a catalytic residue. Residues Lys149, Asp181, and 218 to 221 (TKFE) each bind substrate.

It belongs to the class I-like SAM-binding methyltransferase superfamily. TrmB family.

The enzyme catalyses guanosine(46) in tRNA + S-adenosyl-L-methionine = N(7)-methylguanosine(46) in tRNA + S-adenosyl-L-homocysteine. It functions in the pathway tRNA modification; N(7)-methylguanine-tRNA biosynthesis. Its function is as follows. Catalyzes the formation of N(7)-methylguanine at position 46 (m7G46) in tRNA. The sequence is that of tRNA (guanine-N(7)-)-methyltransferase from Pseudomonas putida (strain ATCC 700007 / DSM 6899 / JCM 31910 / BCRC 17059 / LMG 24140 / F1).